The chain runs to 222 residues: Charged multivesicular body protein 3 (222 aa).

The N-myristoyl glycine moiety is linked to residue glycine 2. Positions 2–113 (GLFGKTQEKP…LQKSTEVMKA (112 aa)) are intramolecular interaction with C-terminus. Residues 22–54 (KIRKEMRVVDRQIRDIQREEEKVKRSVKDAAKK) adopt a coiled-coil conformation. Important for autoinhibitory function stretches follow at residues 59–64 (VCVVLA) and 168–169 (IL). A coiled-coil region spans residues 149–222 (ESMDDQEEME…MQSRLATLRS (74 aa)). The interval 151–220 (MDDQEEMEEA…EAMQSRLATL (70 aa)) is intramolecular interaction with N-terminus. The interval 151-222 (MDDQEEMEEA…MQSRLATLRS (72 aa)) is interaction with VPS4A. Residue lysine 179 forms a Glycyl lysine isopeptide (Lys-Gly) (interchain with G-Cter in ubiquitin) linkage. A disordered region spans residues 180–222 (APSKVTDALPEPEPLGAMAASEDEEEEEEALEAMQSRLATLRS). Interaction with STAMBP stretches follow at residues 196-222 (AMAA…TLRS), 203-207 (EEEEE), and 221-222 (RS). Serine 200 carries the phosphoserine modification. Positions 200 to 210 (SEDEEEEEEAL) are enriched in acidic residues. The short motif at 201-211 (EDEEEEEEALE) is the MIT-interacting motif element.

This sequence belongs to the SNF7 family. In terms of assembly, probable core component of the endosomal sorting required for transport complex III (ESCRT-III). ESCRT-III components are thought to multimerize to form a flat lattice on the perimeter membrane of the endosome. Several assembly forms of ESCRT-III may exist that interact and act sequentially. Forms a metastable monomer in solution; its core structure (without part of the putative autoinhibitory C-terminal acidic region) oligomerizes into a flat lattice via two different dimerization interfaces. In vitro, heteromerizes with CHMP2A (but not CHMP4) to form helical tubular structures that expose membrane-interacting sites on the outside whereas VPS4B can associate on the inside of the tubule. May interact with IGFBP7; the relevance of such interaction however remains unclear. Interacts with CHMP2A. Interacts with CHMP4A; the interaction requires the release of CHMP4A autoinhibition. Interacts with VPS4A. Interacts with STAMBP; the interaction appears to relieve the autoinhibition of CHMP3. Interacts with VTA1.

It is found in the cytoplasm. Its subcellular location is the cytosol. It localises to the membrane. The protein resides in the endosome. The protein localises to the late endosome membrane. Probable core component of the endosomal sorting required for transport complex III (ESCRT-III) which is involved in multivesicular bodies (MVBs) formation and sorting of endosomal cargo proteins into MVBs. MVBs contain intraluminal vesicles (ILVs) that are generated by invagination and scission from the limiting membrane of the endosome and mostly are delivered to lysosomes enabling degradation of membrane proteins, such as stimulated growth factor receptors, lysosomal enzymes and lipids. The MVB pathway appears to require the sequential function of ESCRT-O, -I,-II and -III complexes. ESCRT-III proteins mostly dissociate from the invaginating membrane before the ILV is released. The ESCRT machinery also functions in topologically equivalent membrane fission events, such as the terminal stages of cytokinesis and the budding of enveloped viruses (lentiviruses). ESCRT-III proteins are believed to mediate the necessary vesicle extrusion and/or membrane fission activities, possibly in conjunction with the AAA ATPase VPS4. Selectively binds to phosphatidylinositol 3,5-bisphosphate PtdIns(3,5)P2 and PtdIns(3,4)P2 in preference to other phosphoinositides tested. Involved in late stages of cytokinesis. Plays a role in endosomal sorting/trafficking of EGF receptor. This chain is Charged multivesicular body protein 3 (CHMP3), found in Bos taurus (Bovine).